The chain runs to 251 residues: Ly6/PLAUR domain-containing protein 5 (251 aa).

Positions 1-25 (MAMGVPRVILLCLFGAALCLTGSQA) are cleaved as a signal peptide. N-linked (GlcNAc...) asparagine glycans are attached at residues Asn120 and Asn174. The region spanning 135–214 (CYACIGVHQD…GSCCEGYLCN (80 aa)) is the UPAR/Ly6 domain. Ala225 carries the GPI-anchor amidated alanine lipid modification. The propeptide at 226 to 251 (SATTPPRALQVLALLLPVLLLVGLSA) is removed in mature form.

It localises to the cell membrane. This chain is Ly6/PLAUR domain-containing protein 5 (LYPD5), found in Homo sapiens (Human).